Reading from the N-terminus, the 428-residue chain is Spliceosome RNA helicase DDX39B (428 aa).

Positions 1-19 (MAENDVDNELLDYEDDEVE) are enriched in acidic residues. A disordered region spans residues 1–31 (MAENDVDNELLDYEDDEVETAAGGDGAEAPA). N-acetylalanine is present on Ala-2. Lys-36 is modified (N6-acetyllysine; alternate). A Glycyl lysine isopeptide (Lys-Gly) (interchain with G-Cter in SUMO2); alternate cross-link involves residue Lys-36. Phosphoserine is present on residues Ser-38 and Ser-41. A Q motif motif is present at residues 45 to 73 (SGFRDFLLKPELLRAIVDCGFEHPSEVQH). In terms of domain architecture, Helicase ATP-binding spans 76-249 (IPQAILGMDV…RKFMQDPMEI (174 aa)). 89 to 96 (AKSGMGKT) is a binding site for ATP. Thr-172 carries the post-translational modification Phosphothreonine. The DECD box signature appears at 196-199 (DECD). In terms of domain architecture, Helicase C-terminal spans 261-422 (GLQQYYVKLK…ELPDEIDISS (162 aa)).

This sequence belongs to the DEAD box helicase family. DECD subfamily. In terms of assembly, homodimer, and heterodimer with DDX39A. DDX39B interacts with the THO subcomplex to form the THO-DDX39B complex which multimerizes into a 28-subunit tetrameric assembly. Component of the transcription/export (TREX) complex at least composed of ALYREF/THOC4, DDX39B, SARNP/CIP29, CHTOP and the THO subcomplex; in the complex interacts with THOC2. THOC1-THOC2-THOC3-DDX39B subcomplex is sufficient for the interaction with export factor NXF1-NXT1. TREX seems to have a dynamic structure involving ATP-dependent remodeling. Within the TREX complex bridges ALYREF/THOC4 and the THO subcomplex, and, in a ATP-dependent manner, ALYREF/THOC4 and SARNP/CIP29. Component of the spliceosome. Interacts directly with U2AF2. Interacts with RBM8A, RNPS1 and SRRM1, FYTTD1/UIF, THOC1, MX1 and POLDIP3. Interacts with LUZP4. Interacts with SARNP/CIP29 (via the C-terminal domain); the interaction is direct and facilitates RNA binding of DDX39B. (Microbial infection) Interacts with human cytomegalovirus/HHV-5 protein UL69.

The protein localises to the nucleus. The protein resides in the nucleus speckle. Its subcellular location is the cytoplasm. It carries out the reaction ATP + H2O = ADP + phosphate + H(+). Functionally, involved in nuclear export of spliced and unspliced mRNA. Component of the TREX complex which is thought to couple mRNA transcription, processing and nuclear export, and specifically associates with spliced mRNA and not with unspliced pre-mRNA. The TREX complex is recruited to spliced mRNAs by a transcription-independent mechanism, binds to mRNA upstream of the exon-junction complex (EJC) and is recruited in a splicing- and cap-dependent manner to a region near the 5' end of the mRNA where it functions in mRNA export to the cytoplasm via the TAP/NXF1 pathway. The THOC1-THOC2-THOC3 core complex alone is sufficient to promote ATPase activity of DDX39B; in the complex THOC2 is the only component that directly interacts with DDX39B. Associates with SARNP/CIP29, which facilitates RNA binding of DDX39B and likely plays a role in mRNA export. May undergo several rounds of ATP hydrolysis during assembly of TREX to drive subsequent loading of components such as ALYREF/THOC4 and CHTOP onto mRNA. Also associates with pre-mRNA independent of ALYREF/THOC4. Involved in the nuclear export of intronless mRNA; the ATP-bound form is proposed to recruit export adapter ALYREF/THOC4 to intronless mRNA; its ATPase activity is cooperatively stimulated by RNA and ALYREF/THOC4 and ATP hydrolysis is thought to trigger the dissociation from RNA to allow the association of ALYREF/THOC4 and the NXF1-NXT1 heterodimer. Involved in transcription elongation and genome stability. In terms of biological role, splice factor that is required for the first ATP-dependent step in spliceosome assembly and for the interaction of U2 snRNP with the branchpoint. Has both RNA-stimulated ATP binding/hydrolysis activity and ATP-dependent RNA unwinding activity. Even with the stimulation of RNA, the ATPase activity is weak. Can only hydrolyze ATP but not other NTPs. The RNA stimulation of ATPase activity does not have a strong preference for the sequence and length of the RNA. However, ssRNA stimulates the ATPase activity much more strongly than dsRNA. Can unwind 5' or 3' overhangs or blunt end RNA duplexes in vitro. The ATPase and helicase activities are not influenced by U2AF2; the effect of ALYREF/THOC4 is reported conflictingly with [PubMed:23299939] reporting a stimulatory effect. Its function is as follows. (Microbial infection) The TREX complex is essential for the export of Kaposi's sarcoma-associated herpesvirus (KSHV) intronless mRNAs and infectious virus production. This Homo sapiens (Human) protein is Spliceosome RNA helicase DDX39B.